The chain runs to 357 residues: GTPase Obg (357 aa).

The Obg domain maps to Met-1–Leu-159. An OBG-type G domain is found at Ala-160–His-334. GTP-binding positions include Gly-166 to Ser-173, Phe-191 to His-195, Asp-213 to Gly-216, Asn-284 to Asp-287, and Ser-315 to Leu-317. Residues Ser-173 and Thr-193 each coordinate Mg(2+).

The protein belongs to the TRAFAC class OBG-HflX-like GTPase superfamily. OBG GTPase family. In terms of assembly, monomer. The cofactor is Mg(2+).

The protein localises to the cytoplasm. In terms of biological role, an essential GTPase which binds GTP, GDP and possibly (p)ppGpp with moderate affinity, with high nucleotide exchange rates and a fairly low GTP hydrolysis rate. Plays a role in control of the cell cycle, stress response, ribosome biogenesis and in those bacteria that undergo differentiation, in morphogenesis control. This chain is GTPase Obg, found in Acidovorax ebreus (strain TPSY) (Diaphorobacter sp. (strain TPSY)).